The primary structure comprises 180 residues: Pro-glucagon (180 aa).

An N-terminal signal peptide occupies residues 1–20 (MKSIYFVAGLFVMLVQGSWQ). The disordered stretch occupies residues 26 to 56 (TEEKSRSFSAPQTEPLNDLDQMNEDKRHSQG). The residue at position 54 (Ser-54) is a Phosphoserine. The propeptide occupies 84–89 (NKNNIA). Phosphoserine is present on residues Ser-105 and Ser-108. An Arginine amide modification is found at Arg-127. A propeptide spanning residues 131 to 145 (DFPEEVAIVEEFRRR) is cleaved from the precursor. Phosphoserine is present on residues Ser-150 and Ser-152.

The protein belongs to the glucagon family. Post-translationally, proglucagon is post-translationally processed in a tissue-specific manner in pancreatic A cells and intestinal L cells. In pancreatic A cells, the major bioactive hormone is glucagon cleaved by PCSK2/PC2. In the intestinal L cells PCSK1/PC1 liberates GLP-1, GLP-2, glicentin and oxyntomodulin. GLP-1 is further N-terminally truncated by post-translational processing in the intestinal L cells resulting in GLP-1(7-37) GLP-1-(7-36)amide. The C-terminal amidation is neither important for the metabolism of GLP-1 nor for its effects on the endocrine pancreas. In terms of tissue distribution, glucagon is secreted in the A cells of the islets of Langerhans. GLP-1, GLP-2, oxyntomodulin and glicentin are secreted from enteroendocrine cells throughout the gastrointestinal tract. GLP-1 and GLP-2 are also secreted in selected neurons in the brain.

The protein localises to the secreted. Functionally, plays a key role in glucose metabolism and homeostasis. Regulates blood glucose by increasing gluconeogenesis and decreasing glycolysis. A counterregulatory hormone of insulin, raises plasma glucose levels in response to insulin-induced hypoglycemia. Plays an important role in initiating and maintaining hyperglycemic conditions in diabetes. Its function is as follows. Potent stimulator of glucose-dependent insulin release. Also stimulates insulin release in response to IL6. Plays important roles on gastric motility and the suppression of plasma glucagon levels. May be involved in the suppression of satiety and stimulation of glucose disposal in peripheral tissues, independent of the actions of insulin. Has growth-promoting activities on intestinal epithelium. May also regulate the hypothalamic pituitary axis (HPA) via effects on LH, TSH, CRH, oxytocin, and vasopressin secretion. Increases islet mass through stimulation of islet neogenesis and pancreatic beta cell proliferation. Inhibits beta cell apoptosis. In terms of biological role, stimulates intestinal growth and up-regulates villus height in the small intestine, concomitant with increased crypt cell proliferation and decreased enterocyte apoptosis. The gastrointestinal tract, from the stomach to the colon is the principal target for GLP-2 action. Plays a key role in nutrient homeostasis, enhancing nutrient assimilation through enhanced gastrointestinal function, as well as increasing nutrient disposal. Stimulates intestinal glucose transport and decreases mucosal permeability. Significantly reduces food intake. Inhibits gastric emptying in humans. Suppression of gastric emptying may lead to increased gastric distension, which may contribute to satiety by causing a sensation of fullness. Functionally, may modulate gastric acid secretion and the gastro-pyloro-duodenal activity. May play an important role in intestinal mucosal growth in the early period of life. This is Pro-glucagon (GCG) from Canis lupus familiaris (Dog).